The following is a 402-amino-acid chain: Flavohemoprotein (402 aa).

Residues 1–136 (MLSEKTIEIV…IADAFISIEA (136 aa)) enclose the Globin domain. Residue H85 participates in heme b binding. Catalysis depends on charge relay system residues Y95 and E135. The reductase stretch occupies residues 147-402 (GGWKDFRNFV…EFFGPAASLQ (256 aa)). One can recognise an FAD-binding FR-type domain in the interval 150–260 (KDFRNFVVVK…SAPAGDFVLN (111 aa)). Residues Y188 and 204-207 (RQYS) contribute to the FAD site. 273–278 (GVGITP) is an NADP(+) binding site. 394 to 397 (FFGP) is a binding site for FAD.

The protein belongs to the globin family. Two-domain flavohemoproteins subfamily. In the C-terminal section; belongs to the flavoprotein pyridine nucleotide cytochrome reductase family. Heme b serves as cofactor. It depends on FAD as a cofactor.

It catalyses the reaction 2 nitric oxide + NADPH + 2 O2 = 2 nitrate + NADP(+) + H(+). It carries out the reaction 2 nitric oxide + NADH + 2 O2 = 2 nitrate + NAD(+) + H(+). Functionally, is involved in NO detoxification in an aerobic process, termed nitric oxide dioxygenase (NOD) reaction that utilizes O(2) and NAD(P)H to convert NO to nitrate, which protects the bacterium from various noxious nitrogen compounds. Therefore, plays a central role in the inducible response to nitrosative stress. The polypeptide is Flavohemoprotein (Bacillus thuringiensis subsp. konkukian (strain 97-27)).